The primary structure comprises 96 residues: Co-chaperonin GroES (96 aa).

This sequence belongs to the GroES chaperonin family. As to quaternary structure, heptamer of 7 subunits arranged in a ring. Interacts with the chaperonin GroEL.

It localises to the cytoplasm. Together with the chaperonin GroEL, plays an essential role in assisting protein folding. The GroEL-GroES system forms a nano-cage that allows encapsulation of the non-native substrate proteins and provides a physical environment optimized to promote and accelerate protein folding. GroES binds to the apical surface of the GroEL ring, thereby capping the opening of the GroEL channel. This Cupriavidus necator (strain ATCC 17699 / DSM 428 / KCTC 22496 / NCIMB 10442 / H16 / Stanier 337) (Ralstonia eutropha) protein is Co-chaperonin GroES.